Here is a 404-residue protein sequence, read N- to C-terminus: Serine/threonine transporter SstT (404 aa).

Transmembrane regions (helical) follow at residues 17 to 37 (IGIG…LTGF), 39 to 59 (ILGK…VFAL), 75 to 95 (MTLI…VAVL), 138 to 158 (ALAT…GLAL), 179 to 199 (IVVW…FTTI), 212 to 232 (FLIL…NPLI), 287 to 307 (IPLG…VLTL), and 313 to 333 (FGIP…AVSA).

This sequence belongs to the dicarboxylate/amino acid:cation symporter (DAACS) (TC 2.A.23) family.

Its subcellular location is the cell membrane. It carries out the reaction L-serine(in) + Na(+)(in) = L-serine(out) + Na(+)(out). The catalysed reaction is L-threonine(in) + Na(+)(in) = L-threonine(out) + Na(+)(out). Its function is as follows. Involved in the import of serine and threonine into the cell, with the concomitant import of sodium (symport system). The protein is Serine/threonine transporter SstT of Streptococcus pyogenes serotype M5 (strain Manfredo).